The following is a 513-amino-acid chain: Probable vesicular acetylcholine transporter-A (513 aa).

Residues 1-39 lie on the Cytoplasmic side of the membrane; sequence MATEESGGLAQTAAVKLSEMGERTKQLGNAIQDPERQRR. The helical transmembrane segment at 40–60 threads the bilayer; the sequence is IILVIVCVALLLDNMLYMVIV. Residues 61-98 are Lumenal, vesicle-facing; it reads PIVPDYLAHLESESEQAHVKGNSSINITQNENFDLQIG. N-linked (GlcNAc...) asparagine glycosylation is found at Asn82 and Asn86. The helical transmembrane segment at 99 to 119 threads the bilayer; the sequence is VLFASKAILQLLVNPLTGTFI. Residues 120-125 are Cytoplasmic-facing; sequence DRVGYD. A helical membrane pass occupies residues 126-146; that stretch reads IPLLIGLSIMFVSTCIFAFAE. Residues 147–156 lie on the Lumenal, vesicle side of the membrane; the sequence is NYATLFMARS. Residues 157–174 form a helical membrane-spanning segment; that stretch reads LQGLGSAFADTSGIAMIA. Over 175 to 186 the chain is Cytoplasmic; sequence DKYAEESERSRA. A helical transmembrane segment spans residues 187-207; sequence LGIALAFISFGSLAAPPFGGV. Topologically, residues 208–215 are lumenal, vesicle; the sequence is LYEFAGKR. The helical transmembrane segment at 216-236 threads the bilayer; it reads FPFIALACVCLADGILCLTVL. Residues 237–257 are Cytoplasmic-facing; that stretch reads KPFSSRTRENMPVGTPIYKLM. A helical transmembrane segment spans residues 258–278; sequence IDPYIAVVAGALTTCNIPLAF. At 279 to 296 the chain is on the lumenal, vesicle side; that stretch reads LEPTIANWMEETMNASQW. The N-linked (GlcNAc...) asparagine glycan is linked to Asn292. The chain crosses the membrane as a helical span at residues 297 to 317; sequence QIGITWLPAFFPHILGVYLTV. Over 318–327 the chain is Cytoplasmic; the sequence is KLAAKYPHLQ. A helical membrane pass occupies residues 328–348; that stretch reads WFYGALGMVIIGASSCIVPAC. At 349–353 the chain is on the lumenal, vesicle side; it reads KNFEQ. The chain crosses the membrane as a helical span at residues 354-374; that stretch reads LIIPLCGVCFGIALVDTALLP. The Cytoplasmic portion of the chain corresponds to 375–390; the sequence is TLAFLVDVRHVSVYGS. The chain crosses the membrane as a helical span at residues 391 to 411; sequence VYAIADISYCVAYALGPIVAG. Topologically, residues 412 to 418 are lumenal, vesicle; sequence KIVHDLG. Residues 419 to 439 traverse the membrane as a helical segment; that stretch reads FVQLNLGMGLANVLYAPALLL. The Cytoplasmic portion of the chain corresponds to 440–513; that stretch reads LRNVSLMKPS…EEETSEPEYI (74 aa). Residues 475-513 form a disordered region; the sequence is RKKHGYSSSGNCVPIDENGTFAGQSKSFSEEETSEPEYI. Over residues 504–513 the composition is skewed to acidic residues; sequence EEETSEPEYI.

It belongs to the major facilitator superfamily. Vesicular transporter family.

It localises to the membrane. Functionally, involved in acetylcholine transport into synaptic vesicles. The sequence is that of Probable vesicular acetylcholine transporter-A from Danio rerio (Zebrafish).